Consider the following 239-residue polypeptide: Fatty acid metabolism regulator protein (239 aa).

Residues 6–74 (KGPASFAEKY…HGKPTQVNNF (69 aa)) enclose the HTH gntR-type domain. The H-T-H motif DNA-binding region spans 34-53 (ERELSELIGVTRTTLREVLQ).

In terms of assembly, homodimer.

It is found in the cytoplasm. In terms of biological role, multifunctional regulator of fatty acid metabolism. This Shewanella frigidimarina (strain NCIMB 400) protein is Fatty acid metabolism regulator protein.